The primary structure comprises 292 residues: Probable septum site-determining protein MinC (292 aa).

A disordered region spans residues 109–188 (QVIDTAPPND…PQSSSALVIT (80 aa)). Acidic residues predominate over residues 140–150 (QDDEADGEQAD). Residues 171-185 (ANRPTATPPQSSSAL) show a composition bias toward polar residues.

Belongs to the MinC family. Interacts with MinD and FtsZ.

Functionally, cell division inhibitor that blocks the formation of polar Z ring septums. Rapidly oscillates between the poles of the cell to destabilize FtsZ filaments that have formed before they mature into polar Z rings. Prevents FtsZ polymerization. In Bordetella pertussis (strain Tohama I / ATCC BAA-589 / NCTC 13251), this protein is Probable septum site-determining protein MinC.